The sequence spans 187 residues: NADH-quinone oxidoreductase subunit B (187 aa).

Positions 66, 67, 131, and 161 each coordinate [4Fe-4S] cluster.

This sequence belongs to the complex I 20 kDa subunit family. As to quaternary structure, NDH-1 is composed of 14 different subunits. Subunits NuoB, C, D, E, F, and G constitute the peripheral sector of the complex. The cofactor is [4Fe-4S] cluster.

It is found in the cell inner membrane. The enzyme catalyses a quinone + NADH + 5 H(+)(in) = a quinol + NAD(+) + 4 H(+)(out). NDH-1 shuttles electrons from NADH, via FMN and iron-sulfur (Fe-S) centers, to quinones in the respiratory chain. The immediate electron acceptor for the enzyme in this species is believed to be ubiquinone. Couples the redox reaction to proton translocation (for every two electrons transferred, four hydrogen ions are translocated across the cytoplasmic membrane), and thus conserves the redox energy in a proton gradient. The sequence is that of NADH-quinone oxidoreductase subunit B from Methylocella silvestris (strain DSM 15510 / CIP 108128 / LMG 27833 / NCIMB 13906 / BL2).